The following is a 749-amino-acid chain: MGSDKRVSRSERSGRYGSAFDRDDRDDRDSRSRRRDSEYKRYRDERNDQYDDYRDYESPERERMRDRERRNSDRSEDGYHSDGDYMDHDYRQDYYMDEKESKTIMLRGLPININENDIRELVESFEGPQPADVRLMKRKTGLSRGFAFVEFYHLQDATRWMEANQKKLVIQGKTIAMHYSNPRPKFEDWLCNKCGLYNFRRRLKCFRCGAAKAESDMEAPSGSSETPQSADYYSDSGYVSSAIILRNIGPHTVVDSILSALAPYVSLVVSNIRLIKDKQTQQNRGFAFVQLPSALEASQLLQILQTLHPPLKIDGKTIGVDFAKSARKDLVLPDGHRVSAFSVASTAIAAAQWSATQPAQQSGEAGDYAYLQQGQEGNSNFGQCSQDYQPFYQTQTAAVDQDTAPQSEGSPVPATTSAVVCQSPQMYQQPGSPTQSGTSTAASTTPASTTSTEEATTPTAIVPGVKYSVPDTSTYQYDESSGYYYDPQTGLYYDPNSQYYYNSLTQQYLYWDGEKQTYLPAADGTGQSGAQPNGANPGTSKEGKEKKEKPKSKTAQQIAKDMERWAKSLNKQKENFKNSFQPLSSRDEERKESAAADAGFALFEKKQGALFERQFLPDMMMMMVNTEEEKPPNAKYRDRAAERREKYGIPEPPEPKRKRFDPTVVNYEQPTKDGIDNSNIGNKMLQAMGWKEGSGLGRKSQGITAPIQAQVRMRGAGLGAKGSSYGVNTSDSYKDAVKKAMFARFSEME.

Residues 1-88 form a disordered region; that stretch reads MGSDKRVSRS…YHSDGDYMDH (88 aa). Residues 102–182 form the RRM 1 domain; sequence KTIMLRGLPI…KTIAMHYSNP (81 aa). A RanBP2-type zinc finger spans residues 185 to 214; that stretch reads KFEDWLCNKCGLYNFRRRLKCFRCGAAKAE. One can recognise an RRM 2 domain in the interval 241–325; sequence SAIILRNIGP…KTIGVDFAKS (85 aa). Disordered stretches follow at residues 425–471, 520–558, 570–595, and 626–680; these read QMYQ…SVPD, PAADGTGQSGAQPNGANPGTSKEGKEKKEKPKSKTAQQI, NKQKENFKNSFQPLSSRDEERKESAA, and TEEE…NSNI. A compositionally biased stretch (low complexity) spans 429 to 460; sequence QPGSPTQSGTSTAASTTPASTTSTEEATTPTA. Basic and acidic residues-rich tracts occupy residues 585–594 and 627–648; these read SRDEERKESA and EEEKPPNAKYRDRAAERREKYG. The region spanning 677-723 is the G-patch domain; that stretch reads NSNIGNKMLQAMGWKEGSGLGRKSQGITAPIQAQVRMRGAGLGAKGS.

The protein belongs to the RBM5/RBM10 family. Component of the spliceosome A complex (also known as the prespliceosome). Appears to dissociate from the spliceosome upon formation of the spliceosome B complex (also known as the precatalytic spliceosome), in which the heterotrimeric U4/U6.U5 snRNPs are bound.

It is found in the nucleus. Component of the spliceosome A complex. Regulates alternative splicing of a number of mRNAs. May modulate splice site pairing after recruitment of the U1 and U2 snRNPs to the 5' and 3' splice sites of the intron. This Xenopus laevis (African clawed frog) protein is RNA-binding protein 5-B (rbm5-b).